An 872-amino-acid polypeptide reads, in one-letter code: Alanine--tRNA ligase (872 aa).

Positions 567, 571, 669, and 673 each coordinate Zn(2+).

It belongs to the class-II aminoacyl-tRNA synthetase family. Requires Zn(2+) as cofactor.

The protein resides in the cytoplasm. It carries out the reaction tRNA(Ala) + L-alanine + ATP = L-alanyl-tRNA(Ala) + AMP + diphosphate. Functionally, catalyzes the attachment of alanine to tRNA(Ala) in a two-step reaction: alanine is first activated by ATP to form Ala-AMP and then transferred to the acceptor end of tRNA(Ala). Also edits incorrectly charged Ser-tRNA(Ala) and Gly-tRNA(Ala) via its editing domain. The chain is Alanine--tRNA ligase from Streptococcus mutans serotype c (strain ATCC 700610 / UA159).